A 218-amino-acid chain; its full sequence is MALGFFCLAIFLYLSLDPDSGYTSASAAASGKEGVEITYGSAIKLMHEKTKFRLHSHDVPYGSGSGQQSVTGFPGVVDSNSYWIVKPVPGTTEKQGDAVKSGATIRLQHMKTRKWLHSHLHASPISGNLEVSCFGDDTNSDTGDHWKLIIEGSGKTWKQDQRVRLQHIDTSGYLHSHDKKYQRIAGGQQEVCGIREKKADNIWLAAEGVYLPLNESSK.

Residues Met1–Gly21 form the signal peptide. 3 MIR domains span residues Gly34–Val88, Gly96–Glu151, and Gly154–Gly208. Asn214 carries N-linked (GlcNAc...) asparagine glycosylation.

In terms of assembly, interacts with ERDJ3B.

It is found in the endoplasmic reticulum. Involved in the endoplasmic reticulum (ER) protein quality control and unfolded protein response. May be involved in the quality control of glycoproteins. Forms a complex in the ER with ERDJ3B and MED37A/BIP1 which is required for the proper accumulation and function of the surface-exposed leucine-rich repeat receptor kinases EFR involved in pathogen-associated molecular pattern (PAMP) triggered immunity. This Arabidopsis thaliana (Mouse-ear cress) protein is Stromal cell-derived factor 2-like protein (SDF2).